The chain runs to 549 residues: Cytoplasmic trehalase (549 aa).

Substrate-binding positions include Arg-168, Trp-175–Asp-176, Asn-212, Arg-221–Gln-223, Arg-292–Glu-294, and Gly-324. Residues Asp-326 and Glu-509 each act as proton donor/acceptor in the active site. Substrate is bound at residue Glu-525.

It belongs to the glycosyl hydrolase 37 family. Monomer.

Its subcellular location is the cytoplasm. The catalysed reaction is alpha,alpha-trehalose + H2O = alpha-D-glucose + beta-D-glucose. It participates in glycan degradation; trehalose degradation; D-glucose from alpha,alpha-trehalose: step 1/1. Its function is as follows. Hydrolyzes trehalose to glucose. Could be involved, in cells returning to low osmolarity conditions, in the utilization of the accumulated cytoplasmic trehalose, which was synthesized in response to high osmolarity. This chain is Cytoplasmic trehalase, found in Salmonella choleraesuis (strain SC-B67).